An 84-amino-acid chain; its full sequence is MNYLVMISFALLLMKGVESVRDAYIAKPENCVYHCAGNEGCNKLCTDNGAESGYCQWGGRYGNACWCIKLPDDVPIRVPGKCHR.

A signal peptide spans 1–19 (MNYLVMISFALLLMKGVES). Residues 21–83 (RDAYIAKPEN…VPIRVPGKCH (63 aa)) enclose the LCN-type CS-alpha/beta domain. Cystine bridges form between Cys31-Cys82, Cys35-Cys55, Cys41-Cys65, and Cys45-Cys67. Position 84 (Arg84) is a propeptide, removed by a carboxypeptidase.

This sequence belongs to the long (4 C-C) scorpion toxin superfamily. Sodium channel inhibitor family. Alpha subfamily. As to expression, expressed by the venom gland.

It is found in the secreted. In terms of biological role, alpha toxins bind voltage-independently at site-3 of sodium channels (Nav) and inhibit the inactivation of the activated channels, thereby blocking neuronal transmission. This toxin is active against mammals. This chain is Toxin BmKaTx13, found in Olivierus martensii (Manchurian scorpion).